The sequence spans 404 residues: F-box only protein 12 (404 aa).

Residues 1 to 44 (MKNSIPIDLIYEILSRLPAKSVARCRCVSKRWRSILRHQVFTEL) form the F-box domain. Residues 383–403 (LAILFCLFFLLFNYLIRLCWV) form a helical membrane-spanning segment.

It localises to the membrane. This chain is F-box only protein 12 (FBX12), found in Arabidopsis thaliana (Mouse-ear cress).